Consider the following 269-residue polypeptide: HTH-type transcriptional regulator Rv0792c (269 aa).

In terms of domain architecture, HTH gntR-type spans 20–88 (VPASTQLAEA…QGLGTFVADP (69 aa)). Positions 48-67 (ERELIDRSGLSRVTVRAAVG) form a DNA-binding region, H-T-H motif.

Homodimer.

DNA-binding activity is increased in the presence of L-arabinose and inhibited by the small molecule I-OMe-Tyrphostin. In terms of biological role, transcriptional regulator required for survival in oxidative stress and for establishing infection in host tissues. Regulates the expression of a subset of genes involved in oxidative stress adaptation and virulence, enabling the bacteria to adapt and persist in host tissues. The chain is HTH-type transcriptional regulator Rv0792c from Mycobacterium tuberculosis (strain ATCC 25618 / H37Rv).